The following is a 93-amino-acid chain: Small ribosomal subunit protein uS19 (93 aa).

The protein belongs to the universal ribosomal protein uS19 family.

Its function is as follows. Protein S19 forms a complex with S13 that binds strongly to the 16S ribosomal RNA. The chain is Small ribosomal subunit protein uS19 from Campylobacter fetus subsp. fetus (strain 82-40).